The following is a 1338-amino-acid chain: ABC-type transporter kk1G (1338 aa).

A disordered region spans residues 1 to 21 (MSAIELPPLRSRSEEAARAEH). Basic and acidic residues predominate over residues 11 to 21 (SRSEEAARAEH). Transmembrane regions (helical) follow at residues 75 to 95 (YFLISLCCFTSIGAGTAMPLM), 130 to 150 (LYIFYLFIGKFAMSYISMLAI), 203 to 223 (HFATLFQSLAFTVGLYVVALV), 230 to 250 (LIASTGLPFILIVYGAMFPPF), 312 to 332 (TMSPAMVAMYGIFGITFWFGI), and 340 to 360 (ISSVGDITVVLFSVMMAVMNI). One can recognise an ABC transmembrane type-1 1 domain in the interval 80 to 372 (LCCFTSIGAG…VASPIISIAK (293 aa)). Positions 405-706 (ITFINVAFSY…GDGVYYGLVH (302 aa)) constitute an ABC transporter 1 domain. 440-447 (GPSGSGKS) serves as a coordination point for ATP. 2 disordered regions span residues 473 to 518 (EIPS…TCTG) and 715 to 747 (EDDDDHSSSLENIKMNDTKEDTASSGFEGHASR). Helical transmembrane passes span 777–797 (VCCIGILGAGAVYPLQAYIFA), 816–836 (FWAGMFGVLAGGVGLSYYLLG), 895–917 (MSMALIACTNLLGCTIIAFVYGW), 919–941 (LSLVGLFAALPLILGAGLVRTRL), 1003–1023 (IIFAASDSLELACMSLTFWYG), and 1037–1057 (FFIVYTAIIQGATAAGIWFSF). The region spanning 777-1063 (VCCIGILGAG…WFSFTPSMAQ (287 aa)) is the ABC transmembrane type-1 2 domain. The ABC transporter 2 domain occupies 1096-1333 (IEFQHVSFKY…KGVYWQMCQA (238 aa)). 1130-1137 (GSSGCGKS) serves as a coordination point for ATP.

Belongs to the ABC transporter superfamily. ABCB family. Multidrug resistance exporter (TC 3.A.1.201) subfamily.

It localises to the cell membrane. Its pathway is secondary metabolite biosynthesis. Its function is as follows. ABC transporter; part of the gene cluster that mediates the biosynthesis of KK-1, a novel cyclic depsipeptide with 10 residues which is a promising active compound with high activity against many plant pathogens, especially Botrytis cinerea. Is probably directly involved in the secretion of KK-1 and thus confers self-tolerance against KK-1. In Curvularia clavata, this protein is ABC-type transporter kk1G.